A 480-amino-acid polypeptide reads, in one-letter code: Protein nucleotidyltransferase YdiU (480 aa).

ATP is bound by residues glycine 86, glycine 88, arginine 89, lysine 109, aspartate 121, glycine 122, arginine 172, and arginine 179. Aspartate 248 serves as the catalytic Proton acceptor. 2 residues coordinate Mg(2+): asparagine 249 and aspartate 258. Residue aspartate 258 coordinates ATP.

Belongs to the SELO family. It depends on Mg(2+) as a cofactor. Mn(2+) is required as a cofactor.

The enzyme catalyses L-seryl-[protein] + ATP = 3-O-(5'-adenylyl)-L-seryl-[protein] + diphosphate. The catalysed reaction is L-threonyl-[protein] + ATP = 3-O-(5'-adenylyl)-L-threonyl-[protein] + diphosphate. It catalyses the reaction L-tyrosyl-[protein] + ATP = O-(5'-adenylyl)-L-tyrosyl-[protein] + diphosphate. It carries out the reaction L-histidyl-[protein] + UTP = N(tele)-(5'-uridylyl)-L-histidyl-[protein] + diphosphate. The enzyme catalyses L-seryl-[protein] + UTP = O-(5'-uridylyl)-L-seryl-[protein] + diphosphate. The catalysed reaction is L-tyrosyl-[protein] + UTP = O-(5'-uridylyl)-L-tyrosyl-[protein] + diphosphate. Its function is as follows. Nucleotidyltransferase involved in the post-translational modification of proteins. It can catalyze the addition of adenosine monophosphate (AMP) or uridine monophosphate (UMP) to a protein, resulting in modifications known as AMPylation and UMPylation. The polypeptide is Protein nucleotidyltransferase YdiU (Salmonella enteritidis PT4 (strain P125109)).